A 156-amino-acid chain; its full sequence is MQVQRQLKRDLDKANRYFNKHFTPPTVSYTVRGRKAGVAYLQQNEIRLNPILLSENSSNFVQQVVPHELAHLLVYQQFGQVQPHGKEWKMMMKEVLGVPAETYHCFDVTNVAGQQFPYRCGCQTHFLSIRRHNAIMQHKRSYICKKCKEILVLKVK.

The SprT-like domain maps to 15-153; that stretch reads NRYFNKHFTP…CKKCKEILVL (139 aa). His67 lines the Zn(2+) pocket. Glu68 is a catalytic residue. His71 contacts Zn(2+).

Belongs to the SprT family. The cofactor is Zn(2+).

Its subcellular location is the cytoplasm. The chain is Protein SprT from Glaesserella parasuis serovar 5 (strain SH0165) (Haemophilus parasuis).